Here is a 391-residue protein sequence, read N- to C-terminus: Eukaryotic initiation factor 4A-3 (391 aa).

The Q motif signature appears at 18–46 (ASFAEMGIKDDLLRGVYQYGFEKPSAIQQ). The Helicase ATP-binding domain maps to 49–219 (VLPIISGRDV…SKFMTDPVRI (171 aa)). 62–69 (AQSGTGKT) provides a ligand contact to ATP. The DEAD box motif lies at 167–170 (DESD). The region spanning 230–391 (GIKQFFVAVE…EMPMNVADLI (162 aa)) is the Helicase C-terminal domain.

It belongs to the DEAD box helicase family. eIF4A subfamily. As to quaternary structure, eIF4F is a multi-subunit complex, the composition of which varies with external and internal environmental conditions. It is composed of at least EIF4A, EIF4E and EIF4G.

It carries out the reaction ATP + H2O = ADP + phosphate + H(+). Its function is as follows. ATP-dependent RNA helicase which is a subunit of the eIF4F complex involved in cap recognition and is required for mRNA binding to ribosome. In the current model of translation initiation, eIF4A unwinds RNA secondary structures in the 5'-UTR of mRNAs which is necessary to allow efficient binding of the small ribosomal subunit, and subsequent scanning for the initiator codon. In Nicotiana plumbaginifolia (Leadwort-leaved tobacco), this protein is Eukaryotic initiation factor 4A-3.